Reading from the N-terminus, the 304-residue chain is Methionyl-tRNA formyltransferase (304 aa).

110–113 (SLLP) is a (6S)-5,6,7,8-tetrahydrofolate binding site.

The protein belongs to the Fmt family.

It catalyses the reaction L-methionyl-tRNA(fMet) + (6R)-10-formyltetrahydrofolate = N-formyl-L-methionyl-tRNA(fMet) + (6S)-5,6,7,8-tetrahydrofolate + H(+). Attaches a formyl group to the free amino group of methionyl-tRNA(fMet). The formyl group appears to play a dual role in the initiator identity of N-formylmethionyl-tRNA by promoting its recognition by IF2 and preventing the misappropriation of this tRNA by the elongation apparatus. This is Methionyl-tRNA formyltransferase from Sulfurovum sp. (strain NBC37-1).